A 361-amino-acid chain; its full sequence is 3-dehydroquinate synthase (361 aa).

NAD(+)-binding positions include 72–77, 130–131, Lys-142, and Lys-151; these read SGEKEK and TT. The Zn(2+) site is built by Glu-184, His-247, and His-264.

It belongs to the sugar phosphate cyclases superfamily. Dehydroquinate synthase family. The cofactor is NAD(+). It depends on Co(2+) as a cofactor. Requires Zn(2+) as cofactor.

The protein resides in the cytoplasm. It carries out the reaction 7-phospho-2-dehydro-3-deoxy-D-arabino-heptonate = 3-dehydroquinate + phosphate. It functions in the pathway metabolic intermediate biosynthesis; chorismate biosynthesis; chorismate from D-erythrose 4-phosphate and phosphoenolpyruvate: step 2/7. Its function is as follows. Catalyzes the conversion of 3-deoxy-D-arabino-heptulosonate 7-phosphate (DAHP) to dehydroquinate (DHQ). The protein is 3-dehydroquinate synthase of Bacillus cereus (strain ATCC 14579 / DSM 31 / CCUG 7414 / JCM 2152 / NBRC 15305 / NCIMB 9373 / NCTC 2599 / NRRL B-3711).